The chain runs to 4730 residues: Dynein heavy chain, cytoplasmic (4730 aa).

2 disordered regions span residues Met-1–Pro-23 and Thr-91–Ser-120. Residues Met-1 to Tyr-1935 are stem. The span at Ser-10 to Pro-23 shows a compositional bias: low complexity. Positions Val-867 to Ser-900 form a coiled coil. The segment at Glu-964–Ile-1016 is disordered. Residues Ser-969–Lys-978 show a composition bias toward polar residues. Over residues Thr-1002–Ile-1016 the composition is skewed to low complexity. Coiled coils occupy residues Glu-1204 to Ser-1224, Ala-1343 to Asp-1372, Arg-1425 to Leu-1441, and Ala-1661 to Arg-1689. 4 AAA regions span residues Tyr-1936–Ser-2158, Lys-2238–Leu-2531, Glu-2635–Ala-2885, and Val-2978–Gln-3252. Residue Gly-1974 to Thr-1981 participates in ATP binding. A coiled-coil region spans residues Ile-2231–Gln-2253. Residue Gly-2276–Thr-2283 participates in ATP binding. The segment at Glu-2437–Ser-2486 is disordered. Residues Pro-2441–Glu-2451 are compositionally biased toward basic and acidic residues. Residues Gln-2442–Thr-2462 are a coiled coil. Over residues Gln-2454–Ser-2486 the composition is skewed to low complexity. Residues Gly-2674–Thr-2681 and Gly-3016–Ser-3023 contribute to the ATP site. 3 coiled-coil regions span residues Ile-3271–Asp-3349, Ala-3483–Met-3585, and Thr-3854–Glu-3881. The interval Ile-3271 to Met-3585 is stalk. 2 AAA regions span residues Leu-3638–Leu-3867 and Ser-4098–Tyr-4312. Positions Lys-4432–Lys-4465 are disordered. Basic and acidic residues predominate over residues Ser-4449–Lys-4463.

This sequence belongs to the dynein heavy chain family. As to quaternary structure, consists of at least two heavy chains and a number of intermediate and light chains.

The protein resides in the cytoplasm. It is found in the cytoskeleton. In terms of biological role, cytoplasmic dynein acts as a motor for the intracellular retrograde motility of vesicles and organelles along microtubules. Dynein has ATPase activity; the force-producing power stroke is thought to occur on release of ADP. The sequence is that of Dynein heavy chain, cytoplasmic (dhcA) from Dictyostelium discoideum (Social amoeba).